The following is a 119-amino-acid chain: MILGIGIDLVEIKRFEQLARQTDNCFAKRLLTSTEYAHYAKLRKDSEKSSFLAVHWSLKEAIYKAVNHIKPLFSQLEITKKNQRYNCQIDPKIELLLSVSYSSNNITAICLAQQTPWKN.

Asp-8 and Glu-60 together coordinate Mg(2+).

This sequence belongs to the P-Pant transferase superfamily. AcpS family. Mg(2+) is required as a cofactor.

It is found in the cytoplasm. The catalysed reaction is apo-[ACP] + CoA = holo-[ACP] + adenosine 3',5'-bisphosphate + H(+). Functionally, transfers the 4'-phosphopantetheine moiety from coenzyme A to a Ser of acyl-carrier-protein. The polypeptide is Holo-[acyl-carrier-protein] synthase (Mycoplasma pneumoniae (strain ATCC 29342 / M129 / Subtype 1) (Mycoplasmoides pneumoniae)).